A 520-amino-acid polypeptide reads, in one-letter code: GMP synthase [glutamine-hydrolyzing] (520 aa).

In terms of domain architecture, Glutamine amidotransferase type-1 spans 8–202 (RLLIIDFGSQ…FVRLAGFSGD (195 aa)). Cys-86 functions as the Nucleophile in the catalytic mechanism. Residues His-177 and Glu-179 contribute to the active site. One can recognise a GMPS ATP-PPase domain in the interval 203–395 (WTMGAYREQM…LGLPDSFIGR (193 aa)). Residue 230–236 (SGGVDSS) coordinates ATP.

In terms of assembly, homodimer.

It catalyses the reaction XMP + L-glutamine + ATP + H2O = GMP + L-glutamate + AMP + diphosphate + 2 H(+). It functions in the pathway purine metabolism; GMP biosynthesis; GMP from XMP (L-Gln route): step 1/1. Catalyzes the synthesis of GMP from XMP. The polypeptide is GMP synthase [glutamine-hydrolyzing] (Ruegeria sp. (strain TM1040) (Silicibacter sp.)).